The chain runs to 188 residues: Peptidyl-tRNA hydrolase (188 aa).

Tyr15 is a binding site for tRNA. His20 serves as the catalytic Proton acceptor. Residues Phe66, Asn68, and Asn114 each contribute to the tRNA site.

This sequence belongs to the PTH family. In terms of assembly, monomer.

The protein resides in the cytoplasm. It catalyses the reaction an N-acyl-L-alpha-aminoacyl-tRNA + H2O = an N-acyl-L-amino acid + a tRNA + H(+). In terms of biological role, hydrolyzes ribosome-free peptidyl-tRNAs (with 1 or more amino acids incorporated), which drop off the ribosome during protein synthesis, or as a result of ribosome stalling. Catalyzes the release of premature peptidyl moieties from peptidyl-tRNA molecules trapped in stalled 50S ribosomal subunits, and thus maintains levels of free tRNAs and 50S ribosomes. This is Peptidyl-tRNA hydrolase from Lactococcus lactis subsp. cremoris (strain MG1363).